Consider the following 318-residue polypeptide: Probable serine/threonine-protein kinase MRK1 homolog (318 aa).

The 274-residue stretch at 40–313 (YRYVEMIGRG…ASELLRKQFF (274 aa)) folds into the Protein kinase domain. Residues 46 to 54 (IGRGSFGVV) and Lys68 contribute to the ATP site. Asp159 serves as the catalytic Proton acceptor.

It belongs to the protein kinase superfamily. CMGC Ser/Thr protein kinase family. GSK-3 subfamily.

It is found in the cytoplasm. It localises to the nucleus. The catalysed reaction is L-seryl-[protein] + ATP = O-phospho-L-seryl-[protein] + ADP + H(+). It carries out the reaction L-threonyl-[protein] + ATP = O-phospho-L-threonyl-[protein] + ADP + H(+). Its function is as follows. May play a role in the initiation and completion of mitosis. This chain is Probable serine/threonine-protein kinase MRK1 homolog (MRK1), found in Encephalitozoon cuniculi (strain GB-M1) (Microsporidian parasite).